A 238-amino-acid chain; its full sequence is Large ribosomal subunit protein uL3 (238 aa).

Gln-157 carries the post-translational modification N5-methylglutamine.

It belongs to the universal ribosomal protein uL3 family. In terms of assembly, part of the 50S ribosomal subunit. Forms a cluster with proteins L14 and L19. Methylated by PrmB.

Functionally, one of the primary rRNA binding proteins, it binds directly near the 3'-end of the 23S rRNA, where it nucleates assembly of the 50S subunit. The polypeptide is Large ribosomal subunit protein uL3 (Ruthia magnifica subsp. Calyptogena magnifica).